We begin with the raw amino-acid sequence, 804 residues long: DNA mismatch repair protein MutS (804 aa).

An ATP-binding site is contributed by 614-621 (GPNMAGKS).

This sequence belongs to the DNA mismatch repair MutS family.

Its function is as follows. This protein is involved in the repair of mismatches in DNA. It is possible that it carries out the mismatch recognition step. This protein has a weak ATPase activity. The polypeptide is DNA mismatch repair protein MutS (Ehrlichia ruminantium (strain Gardel)).